A 46-amino-acid chain; its full sequence is uncharacterized protein (46 aa).

This is an uncharacterized protein from Dictyostelium discoideum (Social amoeba).